Here is a 363-residue protein sequence, read N- to C-terminus: Carbamoyl phosphate synthase small chain (363 aa).

The CPSase stretch occupies residues 1–172 (MKAFLVLDNG…TKYIFGTHTG (172 aa)). Residues Ser45, Gly224, and Gly226 each contribute to the L-glutamine site. Positions 176–362 (KLAVYDYGVK…YDLVETTKRG (187 aa)) constitute a Glutamine amidotransferase type-1 domain. The active-site Nucleophile is Cys252. L-glutamine-binding residues include Leu253, Gln256, Asn294, Gly296, and Phe297. Residues His335 and Glu337 contribute to the active site.

This sequence belongs to the CarA family. In terms of assembly, composed of two chains; the small (or glutamine) chain promotes the hydrolysis of glutamine to ammonia, which is used by the large (or ammonia) chain to synthesize carbamoyl phosphate. Tetramer of heterodimers (alpha,beta)4.

The enzyme catalyses hydrogencarbonate + L-glutamine + 2 ATP + H2O = carbamoyl phosphate + L-glutamate + 2 ADP + phosphate + 2 H(+). The catalysed reaction is L-glutamine + H2O = L-glutamate + NH4(+). Its pathway is amino-acid biosynthesis; L-arginine biosynthesis; carbamoyl phosphate from bicarbonate: step 1/1. It participates in pyrimidine metabolism; UMP biosynthesis via de novo pathway; (S)-dihydroorotate from bicarbonate: step 1/3. In terms of biological role, small subunit of the glutamine-dependent carbamoyl phosphate synthetase (CPSase). CPSase catalyzes the formation of carbamoyl phosphate from the ammonia moiety of glutamine, carbonate, and phosphate donated by ATP, constituting the first step of 2 biosynthetic pathways, one leading to arginine and/or urea and the other to pyrimidine nucleotides. The small subunit (glutamine amidotransferase) binds and cleaves glutamine to supply the large subunit with the substrate ammonia. The polypeptide is Carbamoyl phosphate synthase small chain (Leptospira borgpetersenii serovar Hardjo-bovis (strain L550)).